The following is a 557-amino-acid chain: Neurofilament light polypeptide (557 aa).

Residue serine 2 is modified to N-acetylserine. Positions 2 to 89 (SSYSYDPYYT…KIVRTQEKAQ (88 aa)) are head. One can recognise an IF rod domain in the interval 86 to 396 (EKAQLQDLND…KLLEGEETRL (311 aa)). The segment at 90-121 (LQDLNDRFANFIERVHELEQRNKVLEAELLLL) is coil 1A. The segment at 122-134 (RQKHNEPSRLRDL) is linker 1. The coil 1B stretch occupies residues 135–230 (YEQEVRELRL…KVHEEELAQL (96 aa)). Residues 231 to 248 (QSQVQYAQISLEVEVAKP) are linker 12. Residues 249–267 (DLSSALRDIRAQYEKLAAK) form a coil 2A region. The tract at residues 268 to 276 (NMQSAEDWF) is linker 2. The interval 277–392 (KSRFTVLTQS…AAYRKLLEGE (116 aa)) is coil 2B. A tail, subdomain A region spans residues 393 to 437 (ETRLSFSGVGAITSGYTQSAPVFGRSAYSLQSSSYMTSRAFPTYY). The tail stretch occupies residues 393-557 (ETRLSFSGVG…KKKKKKKKKK (165 aa)). The interval 438 to 557 (SSHVQEEQLD…KKKKKKKKKK (120 aa)) is tail, subdomain B (acidic). The disordered stretch occupies residues 452-557 (IESSRAEEAK…KKKKKKKKKK (106 aa)). The span at 453 to 464 (ESSRAEEAKAEA) shows a compositional bias: basic and acidic residues. Acidic residues predominate over residues 465–538 (PEEEEEEAGE…GEGEEEEEGK (74 aa)). Residues 539–548 (GEEPAEEESK) are compositionally biased toward basic and acidic residues.

Belongs to the intermediate filament family. In terms of assembly, forms homodimers (in vitro).

Its subcellular location is the cell projection. The protein resides in the axon. It is found in the cytoplasm. The protein localises to the cytoskeleton. Neurofilaments usually contain three intermediate filament proteins: NEFL, NEFM, and NEFH which are involved in the maintenance of neuronal caliber. May additionally cooperate with other neuronal intermediate filament proteins to form neuronal filamentous networks. The chain is Neurofilament light polypeptide (nefl) from Xenopus tropicalis (Western clawed frog).